The sequence spans 351 residues: E3 ubiquitin-protein ligase TRIM63 (351 aa).

Residues 23–79 (CPICLEMFTKPVVILPCQHNLCRKCANDIFQAANPYWTNRGGSVSMSGGRFRCPSCR) form an RING-type zinc finger. An interaction with TTN region spans residues 74–218 (RCPSCRHEVI…LSHKFDALYA (145 aa)). Residues 117–159 (GSHPMCKEHEDEKINIYCLTCEVPTCSLCKVFGAHQACEVAPL) form a B box-type zinc finger. Residues C122, H125, C145, and H151 each contribute to the Zn(2+) site. Residues 189–269 (SQLEDSCRVT…VETAIQSLDE (81 aa)) adopt a coiled-coil conformation. One can recognise a COS domain in the interval 267 to 325 (LDEPGGATFLLSAKPLIKSIVEASKGCQLGKTEQGFENMDYFTLNLEHIAEALRAIDFG). A compositionally biased stretch (acidic residues) spans 326–345 (TDEEEEFTEEEEEEDQEEGV). The tract at residues 326 to 351 (TDEEEEFTEEEEEEDQEEGVSTEGHQ) is disordered.

As to quaternary structure, homodimer. Homooligomer and heterooligomer. Interacts with SUMO2, titin/TTN and GMEB1. Interacts with TRIM54 and probably with TRIM55 and TNNI3. Forms a ternary complex with RACK1 and PRKCE. Interacts with CKM. Muscle specific. Selectively expressed in heart and skeletal muscle.

Its subcellular location is the cytoplasm. The protein localises to the nucleus. It localises to the myofibril. The protein resides in the sarcomere. It is found in the m line. Its subcellular location is the z line. The catalysed reaction is S-ubiquitinyl-[E2 ubiquitin-conjugating enzyme]-L-cysteine + [acceptor protein]-L-lysine = [E2 ubiquitin-conjugating enzyme]-L-cysteine + N(6)-ubiquitinyl-[acceptor protein]-L-lysine.. The protein operates within protein modification; protein ubiquitination. In terms of biological role, E3 ubiquitin ligase. Mediates the ubiquitination and subsequent proteasomal degradation of CKM, GMEB1 and HIBADH. Regulates the proteasomal degradation of muscle proteins under amino acid starvation, where muscle protein is catabolized to provide other organs with amino acids. Inhibits de novo skeletal muscle protein synthesis under amino acid starvation. Regulates proteasomal degradation of cardiac troponin I/TNNI3 and probably of other sarcomeric-associated proteins. May play a role in striated muscle atrophy and hypertrophy by regulating an anti-hypertrophic PKC-mediated signaling pathway. May regulate the organization of myofibrils through TTN in muscle cells. The sequence is that of E3 ubiquitin-protein ligase TRIM63 (Trim63) from Rattus norvegicus (Rat).